Here is a 251-residue protein sequence, read N- to C-terminus: Pyrroloquinoline-quinone synthase (251 aa).

Belongs to the PqqC family.

It catalyses the reaction 6-(2-amino-2-carboxyethyl)-7,8-dioxo-1,2,3,4,7,8-hexahydroquinoline-2,4-dicarboxylate + 3 O2 = pyrroloquinoline quinone + 2 H2O2 + 2 H2O + H(+). The protein operates within cofactor biosynthesis; pyrroloquinoline quinone biosynthesis. Ring cyclization and eight-electron oxidation of 3a-(2-amino-2-carboxyethyl)-4,5-dioxo-4,5,6,7,8,9-hexahydroquinoline-7,9-dicarboxylic-acid to PQQ. This chain is Pyrroloquinoline-quinone synthase, found in Pseudomonas savastanoi pv. phaseolicola (strain 1448A / Race 6) (Pseudomonas syringae pv. phaseolicola (strain 1448A / Race 6)).